Here is a 419-residue protein sequence, read N- to C-terminus: Phospho-N-acetylmuramoyl-pentapeptide-transferase (419 aa).

10 helical membrane passes run 22–42, 72–92, 99–119, 135–155, 208–228, 238–258, 278–298, 303–323, 328–348, and 396–416; these read YVSF…TVIG, TPTM…LLLA, ILLM…DDYI, IIGQ…NPAV, VLFG…FISN, GLAT…AYVS, LTIF…YNAY, FMGD…ALII, LLPI…IQVF, and KITV…IATL.

This sequence belongs to the glycosyltransferase 4 family. MraY subfamily. It depends on Mg(2+) as a cofactor.

It is found in the cell inner membrane. The catalysed reaction is UDP-N-acetyl-alpha-D-muramoyl-L-alanyl-gamma-D-glutamyl-meso-2,6-diaminopimeloyl-D-alanyl-D-alanine + di-trans,octa-cis-undecaprenyl phosphate = di-trans,octa-cis-undecaprenyl diphospho-N-acetyl-alpha-D-muramoyl-L-alanyl-D-glutamyl-meso-2,6-diaminopimeloyl-D-alanyl-D-alanine + UMP. It participates in cell wall biogenesis; peptidoglycan biosynthesis. Catalyzes the initial step of the lipid cycle reactions in the biosynthesis of the cell wall peptidoglycan: transfers peptidoglycan precursor phospho-MurNAc-pentapeptide from UDP-MurNAc-pentapeptide onto the lipid carrier undecaprenyl phosphate, yielding undecaprenyl-pyrophosphoryl-MurNAc-pentapeptide, known as lipid I. The sequence is that of Phospho-N-acetylmuramoyl-pentapeptide-transferase from Porphyromonas gingivalis (strain ATCC BAA-308 / W83).